The sequence spans 267 residues: Undecaprenyl-diphosphatase (267 aa).

Helical transmembrane passes span 1–21, 39–59, 87–107, 113–133, 144–164, 189–209, 219–239, and 244–264; these read MSEL…FLPI, QGLA…LIYF, WWIL…KSLV, SGYV…WADA, TGLK…IPGT, FLMS…KFIL, LFLG…VFLI, and VGMM…FYIL.

The protein belongs to the UppP family.

Its subcellular location is the cell inner membrane. The enzyme catalyses di-trans,octa-cis-undecaprenyl diphosphate + H2O = di-trans,octa-cis-undecaprenyl phosphate + phosphate + H(+). Functionally, catalyzes the dephosphorylation of undecaprenyl diphosphate (UPP). Confers resistance to bacitracin. The chain is Undecaprenyl-diphosphatase from Psychromonas ingrahamii (strain DSM 17664 / CCUG 51855 / 37).